We begin with the raw amino-acid sequence, 529 residues long: Calcium/calmodulin-dependent protein kinase type II subunit gamma (529 aa).

The Protein kinase domain maps to 14-272 (YQLFEELGKG…ADQALKHPWV (259 aa)). ATP-binding positions include 20–28 (LGKGAFSVV) and Lys43. The active-site Proton acceptor is the Asp136. Positions 283–292 (HRQETVECLR) are autoinhibitory domain. Phosphothreonine; by autocatalysis occurs at positions 287, 306, and 307. Residues 294–316 (FNARRKLKGAILTTMLVSRNFSA) form a calmodulin-binding region. Residues Ser311, Ser334, Ser349, Ser352, and Ser455 each carry the phosphoserine modification. The segment at 324–353 (KSDGGVKKRKSSSSVHLMPQSNNKNSLVSP) is disordered. The segment covering 342–352 (PQSNNKNSLVS) has biased composition (polar residues).

It belongs to the protein kinase superfamily. CAMK Ser/Thr protein kinase family. CaMK subfamily. As to quaternary structure, CAMK2 is composed of 4 different chains: alpha (CAMK2A), beta (CAMK2B), gamma (CAMK2G), and delta (CAMK2D). The different isoforms assemble into homo- or heteromultimeric holoenzymes composed of 12 subunits with two hexameric rings stacked one on top of the other. Post-translationally, autophosphorylation of Thr-287 following activation by Ca(2+)/calmodulin. Phosphorylation of Thr-287 locks the kinase into an activated state.

The protein resides in the sarcoplasmic reticulum membrane. The enzyme catalyses L-seryl-[protein] + ATP = O-phospho-L-seryl-[protein] + ADP + H(+). It catalyses the reaction L-threonyl-[protein] + ATP = O-phospho-L-threonyl-[protein] + ADP + H(+). Activated by Ca(2+)/calmodulin. Binding of calmodulin results in conformational change that relieves intrasteric autoinhibition and allows autophosphorylation of Thr-287 which turns the kinase in a constitutively active form and confers to the kinase a Ca(2+)-independent activity. Calcium/calmodulin-dependent protein kinase that functions autonomously after Ca(2+)/calmodulin-binding and autophosphorylation, and is involved in sarcoplasmic reticulum Ca(2+) transport in skeletal muscle and may function in dendritic spine and synapse formation and neuronal plasticity. In slow-twitch muscles, is involved in regulation of sarcoplasmic reticulum (SR) Ca(2+) transport and in fast-twitch muscle participates in the control of Ca(2+) release from the SR through phosphorylation of the ryanodine receptor-coupling factor triadin. In the central nervous system, it is involved in the regulation of neurite formation and arborization. It may participate in the promotion of dendritic spine and synapse formation and maintenance of synaptic plasticity which enables long-term potentiation (LTP) and hippocampus-dependent learning. In response to interferon-gamma (IFN-gamma) stimulation, catalyzes phosphorylation of STAT1, stimulating the JAK-STAT signaling pathway. The chain is Calcium/calmodulin-dependent protein kinase type II subunit gamma (Camk2g) from Mus musculus (Mouse).